A 143-amino-acid polypeptide reads, in one-letter code: Transcriptional regulator MraZ (143 aa).

SpoVT-AbrB domains lie at 5–47 and 76–119; these read EYKH…PMHE and ATEC…SSKR.

Belongs to the MraZ family. Forms oligomers.

It localises to the cytoplasm. The protein resides in the nucleoid. The polypeptide is Transcriptional regulator MraZ (Halothermothrix orenii (strain H 168 / OCM 544 / DSM 9562)).